Reading from the N-terminus, the 155-residue chain is Large ribosomal subunit protein uL22c (155 aa).

Belongs to the universal ribosomal protein uL22 family. In terms of assembly, part of the 50S ribosomal subunit.

The protein resides in the plastid. Its subcellular location is the chloroplast. Functionally, this protein binds specifically to 23S rRNA. The globular domain of the protein is located near the polypeptide exit tunnel on the outside of the subunit, while an extended beta-hairpin is found that lines the wall of the exit tunnel in the center of the 70S ribosome. The chain is Large ribosomal subunit protein uL22c (rpl22) from Nicotiana sylvestris (Wood tobacco).